Consider the following 470-residue polypeptide: Sugar transporter ERD6-like 8 (470 aa).

Residues 1-16 (METRKDDMEKRNDKSE) show a composition bias toward basic and acidic residues. Positions 1-24 (METRKDDMEKRNDKSEPLLLPENG) are disordered. The next 12 helical transmembrane spans lie at 33–53 (WMVYLSTIIAVCGSYEFGTCV), 73–93 (QFSVFGSILNMGAVLGAITSG), 110–130 (VISAIGWLIIYLAKGDVPLDF), 133–153 (FLTGYGCGTLSFVVPVFIAEI), 164–184 (TLNQLFIVIGLASMFLIGAVV), 188–208 (TLALTGVAPCVVLFFGTWFIP), 270–290 (FVIVGVGLMFFQQFVGINGVI), 307–327 (GSILYSIEQVVLTALGATLLI), 335–355 (LLMASAVGMLIGCLLIGNSFL), 373–393 (GVLVYIGSFSIGMGAIPWVIM), 409–429 (VTVVNWLSSWLVSFTFNFLMI), and 434–454 (GTFYVYGGVCVLAIIFIAKLV).

The protein belongs to the major facilitator superfamily. Sugar transporter (TC 2.A.1.1) family.

The protein localises to the membrane. Functionally, sugar transporter. The sequence is that of Sugar transporter ERD6-like 8 from Arabidopsis thaliana (Mouse-ear cress).